Here is a 324-residue protein sequence, read N- to C-terminus: Phospho-N-acetylmuramoyl-pentapeptide-transferase (324 aa).

10 helical membrane passes run 5–25, 52–72, 77–97, 122–142, 149–169, 176–196, 201–221, 227–247, 253–273, and 302–322; these read GLLV…PLFI, PTMG…IMAI, LGAE…IGFL, VIAI…YIMI, FELG…GSNA, LDGL…IIAV, FGVA…LVFN, VFMG…VAIL, LLVI…IQVI, and VVVT…YIGV.

This sequence belongs to the glycosyltransferase 4 family. MraY subfamily. The cofactor is Mg(2+).

It is found in the cell membrane. The enzyme catalyses UDP-N-acetyl-alpha-D-muramoyl-L-alanyl-gamma-D-glutamyl-meso-2,6-diaminopimeloyl-D-alanyl-D-alanine + di-trans,octa-cis-undecaprenyl phosphate = di-trans,octa-cis-undecaprenyl diphospho-N-acetyl-alpha-D-muramoyl-L-alanyl-D-glutamyl-meso-2,6-diaminopimeloyl-D-alanyl-D-alanine + UMP. The protein operates within cell wall biogenesis; peptidoglycan biosynthesis. Catalyzes the initial step of the lipid cycle reactions in the biosynthesis of the cell wall peptidoglycan: transfers peptidoglycan precursor phospho-MurNAc-pentapeptide from UDP-MurNAc-pentapeptide onto the lipid carrier undecaprenyl phosphate, yielding undecaprenyl-pyrophosphoryl-MurNAc-pentapeptide, known as lipid I. The polypeptide is Phospho-N-acetylmuramoyl-pentapeptide-transferase (Bacillus cereus (strain AH820)).